A 269-amino-acid polypeptide reads, in one-letter code: Putative 12-oxophytodienoate reductase-like protein 2A (269 aa).

FMN is bound by residues 28–30 and glutamine 103; that span reads PLT. A substrate-binding site is contributed by 175 to 178; it reads HGAH. The active-site Proton donor is the tyrosine 180. Arginine 227 contributes to the FMN binding site.

Belongs to the NADH:flavin oxidoreductase/NADH oxidase family. It depends on FMN as a cofactor.

Putative oxophytodienoate reductase that may be involved in the biosynthesis or metabolism of oxylipin signaling molecules. This Arabidopsis thaliana (Mouse-ear cress) protein is Putative 12-oxophytodienoate reductase-like protein 2A.